Consider the following 421-residue polypeptide: Lipid II:glycine glycyltransferase (421 aa).

It belongs to the FemABX family. Monomer.

It localises to the cytoplasm. The enzyme catalyses beta-D-GlcNAc-(1-&gt;4)-Mur2Ac(oyl-L-Ala-D-isoglutaminyl-L-Lys-D-Ala-D-Ala)-di-trans,octa-cis-undecaprenyl diphosphate + glycyl-tRNA(Gly) = beta-D-GlcNAc-(1-&gt;4)-Mur2Ac(oyl-L-Ala-D-isoglutaminyl-L-Lys-(N(6)-Gly)-D-Ala-D-Ala)-di-trans,octa-cis-undecaprenyl diphosphate + tRNA(Gly) + H(+). Its function is as follows. Catalyzes the incorporation of the first glycine of the pentaglycine interpeptide bridge, which is characteristic of the S.aureus peptidoglycan. This glycine is added to the epsilon-amino group of the L-lysine of the membrane-bound lipid II intermediate (GlcNAc-(beta-1,4)-N-acetylmuramic acid(-L-Ala-D-iGln-L-Lys-D-Ala-D-Ala)-pyrophosphoryl-undecaprenol), using glycyl-tRNA(Gly) as donor, in a ribosome-independent mechanism. This is Lipid II:glycine glycyltransferase (femX) from Staphylococcus aureus (strain bovine RF122 / ET3-1).